The following is a 357-amino-acid chain: Poly(3-hydroxyalkanoate) polymerase subunit PhaE (357 aa).

The segment at A320 to D357 is disordered. Residues P331 to A344 are compositionally biased toward low complexity.

This sequence belongs to the PHA/PHB synthase family. Type III PhaE subfamily. As to quaternary structure, a large complex of PhaC and PhaE; the ratio of the subunits has been estimated to be from 1:1 to 4:1, with more PhaE than PhaC.

It localises to the cytoplasm. The protein operates within biopolymer metabolism; poly-(R)-3-hydroxybutanoate biosynthesis. Functionally, polymerizes D(-)-3-hydroxybutyryl-CoA to create polyhydroxybutyrate (PHB) which consists of thousands of hydroxybutyrate molecules linked end to end. This subunit has no catalytic activity but enhances the activity of PhaC, the catalytic subunit, 100-fold. In Allochromatium vinosum (strain ATCC 17899 / DSM 180 / NBRC 103801 / NCIMB 10441 / D) (Chromatium vinosum), this protein is Poly(3-hydroxyalkanoate) polymerase subunit PhaE.